Consider the following 172-residue polypeptide: R-phycocyanin-2 beta chain (172 aa).

Position 72 is an N4-methylasparagine (Asn72). Cys82 provides a ligand contact to (2R,3E)-phycocyanobilin. Cys153 lines the (2R,3E)-phycoerythrobilin pocket.

This sequence belongs to the phycobiliprotein family. As to quaternary structure, heterodimer of an alpha and a beta chain. In terms of processing, contains two covalently linked bilin chromophores.

Its subcellular location is the cellular thylakoid membrane. Its function is as follows. Light-harvesting photosynthetic bile pigment-protein from the phycobiliprotein complex. This is R-phycocyanin-2 beta chain (rpcB) from Synechococcus sp. (strain WH8020).